Here is a 156-residue protein sequence, read N- to C-terminus: uncharacterized protein (156 aa).

A compositionally biased stretch (polar residues) spans 1–12; it reads MSSRFARSNGNP. Positions 1–27 are disordered; that stretch reads MSSRFARSNGNPNHIRKRNHSPDPIGI. The residue at position 21 (Ser-21) is a Phosphoserine.

The protein localises to the cytoplasm. The protein resides in the nucleus. This is an uncharacterized protein from Saccharomyces cerevisiae (strain ATCC 204508 / S288c) (Baker's yeast).